We begin with the raw amino-acid sequence, 496 residues long: Glutamyl-tRNA(Gln) amidotransferase subunit A (496 aa).

Catalysis depends on charge relay system residues lysine 75 and serine 150. Catalysis depends on serine 174, which acts as the Acyl-ester intermediate.

It belongs to the amidase family. GatA subfamily. In terms of assembly, heterotrimer of A, B and C subunits.

The enzyme catalyses L-glutamyl-tRNA(Gln) + L-glutamine + ATP + H2O = L-glutaminyl-tRNA(Gln) + L-glutamate + ADP + phosphate + H(+). Its function is as follows. Allows the formation of correctly charged Gln-tRNA(Gln) through the transamidation of misacylated Glu-tRNA(Gln) in organisms which lack glutaminyl-tRNA synthetase. The reaction takes place in the presence of glutamine and ATP through an activated gamma-phospho-Glu-tRNA(Gln). This is Glutamyl-tRNA(Gln) amidotransferase subunit A from Burkholderia ambifaria (strain ATCC BAA-244 / DSM 16087 / CCUG 44356 / LMG 19182 / AMMD) (Burkholderia cepacia (strain AMMD)).